The following is a 780-amino-acid chain: Cyclin-F (780 aa).

Residues 20–28 (KRRIKRRPR) carry the Nuclear localization signal 1 motif. One can recognise an F-box domain in the interval 29-76 (NLTILSLPEDVLFHILKWLSVGDILAVRAVHSHLKYLVDNHASVWASA). Residues 288-405 (QASQAVNKQQ…EIISALEGKI (118 aa)) enclose the Cyclin N-terminal domain. 3 short sequence motifs (d box) span residues 310–313 (RYIL), 343–346 (RRRL), and 349–352 (RYKL). 3 disordered regions span residues 544–594 (QESP…AELS), 651–733 (QESS…STKP), and 745–780 (CRPP…FLKL). A Nuclear localization signal 2 motif is present at residues 568–574 (RRSKRKR). Residues 582-761 (RGSFVTTPTA…ESGAHQQPVK (180 aa)) are PEST. Polar residues predominate over residues 585–594 (FVTTPTAELS). Low complexity-rich tracts occupy residues 695 to 708 (SGYS…PISS) and 719 to 731 (STSV…HSST). The D box 4 signature appears at 762-765 (RQNL).

Belongs to the cyclin family. Cyclin AB subfamily. In terms of assembly, component of the SCF(CCNF) complex consisting of CUL1, RBX1, SKP1 and CCNF. Interacts with SKP1. Interacts with CUL1. Interacts with CCNB1; interaction is required for nuclear localization of CCNB1. Interacts with CCP110; this interaction leads to CCP110 ubiquitination and degradation via the proteasome pathway. Interacts (via the Cyclin N-terminal domain) with MYBL2/BMYB. Interacts with FZR1/CDH1 (via N-terminus). Interacts with RRM2 (via Cy motif and when phosphorylated at 'Thr-33'); the interaction occurs exclusively in G2 and early M. Interacts with CDC6 (via Cy motif); the interaction takes place during G2 and M phase. In terms of processing, degraded when the spindle assembly checkpoint is activated during the G2-M transition. Degradation is not dependent on the proteasome or ubiquitin and depends on the C-terminal PEST sequence. Phosphorylated just before cells enter into mitosis. Post-translationally, ubiquitinated by the anaphase-promoting complex (APC/C); leading to its degradation by the proteasome.

The protein resides in the nucleus. The protein localises to the cytoplasm. Its subcellular location is the perinuclear region. It localises to the cytoskeleton. It is found in the microtubule organizing center. The protein resides in the centrosome. The protein localises to the centriole. Its function is as follows. Substrate recognition component of a SCF (SKP1-CUL1-F-box protein) E3 ubiquitin-protein ligase complex which mediates the ubiquitination and subsequent proteasomal degradation of target proteins. The SCF(CCNF) E3 ubiquitin-protein ligase complex is an integral component of the ubiquitin proteasome system (UPS) and links proteasome degradation to the cell cycle. Mediates the substrate recognition and the proteasomal degradation of various target proteins involved in the regulation of cell cycle progression and in the maintenance of genome stability. Mediates the ubiquitination and subsequent proteasomal degradation of CP110 during G2 phase, thereby acting as an inhibitor of centrosome reduplication. In G2, mediates the ubiquitination and proteasomal degradation of CDC6, thereby suppressing DNA re-replication and preventing genome instability. Involved in the ubiquitination and degradation of the substrate adapter CDH1 of the anaphase-promoting complex (APC/C), thereby acting as an antagonist of APC/C in regulating G1 progression and S phase entry. May play a role in the G2 cell cycle checkpoint control after DNA damage, possibly by promoting the ubiquitination of MYBL2/BMYB. This chain is Cyclin-F (Ccnf), found in Rattus norvegicus (Rat).